A 111-amino-acid polypeptide reads, in one-letter code: Ciprofloxacin tolerance protein (111 aa).

The Periplasmic segment spans residues 1–5; that stretch reads MVTAN. Residues 6-26 traverse the membrane as a helical segment; it reads FAAIAGLSLIAVALVAVFFSP. The Cytoplasmic segment spans residues 27 to 30; it reads YRRW. A helical transmembrane segment spans residues 31–51; that stretch reads LGFMLAGMFFWGLLEVVRFGV. At 52 to 58 the chain is on the periplasmic side; it reads QVTFEMP. A helical membrane pass occupies residues 59-79; that stretch reads VTYSYLTALSLAMVMVTFVLL. The Cytoplasmic portion of the chain corresponds to 80 to 111; it reads REDKQAQKALANRQYIEHTPVYEDDQQQCSSR.

Its subcellular location is the cell inner membrane. In terms of biological role, may play a role in cellular filamentation, especially in response to ciprofloxacin. Increased expression confers tolerance to the antibiotic ciprofloxacin. The sequence is that of Ciprofloxacin tolerance protein from Acinetobacter baumannii.